A 498-amino-acid polypeptide reads, in one-letter code: Guanosine-5'-triphosphate,3'-diphosphate pyrophosphatase (498 aa).

It belongs to the GppA/Ppx family. GppA subfamily.

The enzyme catalyses guanosine 3'-diphosphate 5'-triphosphate + H2O = guanosine 3',5'-bis(diphosphate) + phosphate + H(+). Its pathway is purine metabolism; ppGpp biosynthesis; ppGpp from GTP: step 2/2. Its function is as follows. Catalyzes the conversion of pppGpp to ppGpp. Guanosine pentaphosphate (pppGpp) is a cytoplasmic signaling molecule which together with ppGpp controls the 'stringent response', an adaptive process that allows bacteria to respond to amino acid starvation, resulting in the coordinated regulation of numerous cellular activities. This is Guanosine-5'-triphosphate,3'-diphosphate pyrophosphatase from Yersinia enterocolitica serotype O:8 / biotype 1B (strain NCTC 13174 / 8081).